The chain runs to 564 residues: Formate--tetrahydrofolate ligase (564 aa).

69 to 76 (TPAGEGKS) is a binding site for ATP.

The protein belongs to the formate--tetrahydrofolate ligase family.

The catalysed reaction is (6S)-5,6,7,8-tetrahydrofolate + formate + ATP = (6R)-10-formyltetrahydrofolate + ADP + phosphate. It participates in one-carbon metabolism; tetrahydrofolate interconversion. The sequence is that of Formate--tetrahydrofolate ligase from Renibacterium salmoninarum (strain ATCC 33209 / DSM 20767 / JCM 11484 / NBRC 15589 / NCIMB 2235).